Here is a 316-residue protein sequence, read N- to C-terminus: Ester hydrolase C11orf54 homolog (316 aa).

Zn(2+) is bound by residues histidine 267, histidine 269, and histidine 279.

Monomer. It depends on Zn(2+) as a cofactor.

The protein localises to the nucleus. The protein resides in the cytoplasm. Exhibits ester hydrolase activity on the substrate p-nitrophenyl acetate, in vitro. May regulate DNA damage and repair by regulating HIF1A degradation via chaperone-mediated autophagy (CMA). In Xenopus laevis (African clawed frog), this protein is Ester hydrolase C11orf54 homolog.